Reading from the N-terminus, the 323-residue chain is L-lactate dehydrogenase (323 aa).

NAD(+) contacts are provided by residues V18, D39, R44, Y69, and 83-84 (GA). Substrate contacts are provided by Q86 and R92. Residues T105, 122–124 (AAN), and S147 each bind NAD(+). 124 to 127 (NPVD) is a binding site for substrate. 152 to 155 (DTAR) serves as a coordination point for substrate. H179 (proton acceptor) is an active-site residue. Y223 carries the phosphotyrosine modification. T232 is a binding site for substrate.

It belongs to the LDH/MDH superfamily. LDH family. As to quaternary structure, homotetramer.

The protein localises to the cytoplasm. The enzyme catalyses (S)-lactate + NAD(+) = pyruvate + NADH + H(+). It participates in fermentation; pyruvate fermentation to lactate; (S)-lactate from pyruvate: step 1/1. Functionally, catalyzes the conversion of lactate to pyruvate. The sequence is that of L-lactate dehydrogenase from Pediococcus acidilactici.